Consider the following 354-residue polypeptide: MGSIALFLLVALIKVVLVIFVLLTAVAYTVWLERKVVGRMQNRWGPTRVGPFGLLQPLADGLKFILKEDLLPPHVNKPLYILAPMLAVAMALLSISIVPFGGTLTIGHITTPLQITGIMGANGQPVDINIGLLIILGVTSIGVYGIALAGWSSNSKYSLLGSLRASAQMVSYEVSLGLSLVGVLLLSGSFSLREIVRLQQGGFWNWNIFGGFQFIAFFIYLTSAYAETNRIPFDLPEAETELVAGYHTEYSSMKFAMFFMAEYANMVTVACIASILFLGGWSGPVPGFLPPILQSLVPVFWFCLRIFAFLFIYIWVRGTLPRFRYDQLMAFSWKFLLPLSIANIMVTALFVALK.

The next 8 membrane-spanning stretches (helical) occupy residues 4–24 (IALF…VLLT), 81–101 (ILAP…VPFG), 130–150 (IGLL…ALAG), 170–190 (VSYE…SGSF), 201–221 (GGFW…FIYL), 269–289 (VACI…PGFL), 296–316 (LVPV…YIWV), and 333–353 (WKFL…FVAL).

The protein belongs to the complex I subunit 1 family. As to quaternary structure, NDH-1 is composed of 14 different subunits. Subunits NuoA, H, J, K, L, M, N constitute the membrane sector of the complex.

Its subcellular location is the cell inner membrane. The enzyme catalyses a quinone + NADH + 5 H(+)(in) = a quinol + NAD(+) + 4 H(+)(out). In terms of biological role, NDH-1 shuttles electrons from NADH, via FMN and iron-sulfur (Fe-S) centers, to quinones in the respiratory chain. The immediate electron acceptor for the enzyme in this species is believed to be ubiquinone. Couples the redox reaction to proton translocation (for every two electrons transferred, four hydrogen ions are translocated across the cytoplasmic membrane), and thus conserves the redox energy in a proton gradient. This subunit may bind ubiquinone. This is NADH-quinone oxidoreductase subunit H 2 from Koribacter versatilis (strain Ellin345).